Reading from the N-terminus, the 933-residue chain is Progesterone receptor (933 aa).

An AF3; mediates transcriptional activation region spans residues 1–164; the sequence is MTELKAKGPR…PATQGVLSPL (164 aa). The tract at residues 1–256 is disordered; the sequence is MTELKAKGPR…AAAGGGAAAV (256 aa). Residues 1–566 form a modulating, Pro-Rich region; sequence MTELKAKGPR…YSFESLPQKI (566 aa). The residue at position 20 (Ser20) is a Phosphoserine. Positions 55–59 match the LXXL motif 1 motif; it reads LDGLL. Ser81 carries the phosphoserine modification. The LXXL motif 2 motif lies at 115-119; sequence LDTLL. A phosphoserine mark is found at Ser130 and Ser162. Positions 165–305 are mediates transcriptional transrepression; that stretch reads MSRSGCKAGD…LATTMMDFIH (141 aa). The Nuclear localization signal signature appears at 183–187; the sequence is KVLPR. A phosphoserine mark is found at Ser190 and Ser213. Residues 220 to 231 show a composition bias toward acidic residues; it reads EVEEEDGSESEE. Over residues 232–246 the composition is skewed to low complexity; that stretch reads SAGPLLKGKPRALGG. Ser294 is modified (phosphoserine; by MAPK1). Over residues 335 to 356 the composition is skewed to low complexity; sequence AXSAFAPPRSSPSASSTPVAVG. The segment at 335 to 378 is disordered; sequence AXSAFAPPRSSPSASSTPVAVGDFPDCAYPPDAEPKDDAYPLYS. At Ser345 the chain carries Phosphoserine; by MAPK. Residue Lys388 forms a Glycyl lysine isopeptide (Lys-Gly) (interchain with G-Cter in SUMO); alternate linkage. Lys388 is covalently cross-linked (Glycyl lysine isopeptide (Lys-Gly) (interchain with G-Cter in ubiquitin); alternate). Residue Ser400 is modified to Phosphoserine; by CDK2. The tract at residues 415–452 is disordered; that stretch reads PDFPLGPPPPLPPRAPPSRPGEAAVTAAPASASVSSAS. The span at 418-433 shows a compositional bias: pro residues; the sequence is PLGPPPPLPPRAPPSR. A compositionally biased stretch (low complexity) spans 434-452; that stretch reads PGEAAVTAAPASASVSSAS. An AF1; mediates transcriptional activation region spans residues 456–546; sequence STLECILYKA…VYPPYLNYLR (91 aa). Lys531 participates in a covalent cross-link: Glycyl lysine isopeptide (Lys-Gly) (interchain with G-Cter in SUMO). 2 NR C4-type zinc fingers span residues 567 to 587 and 603 to 627; these read CLIC…CGSC and CAGR…LRKC. The segment at residues 567–639 is a DNA-binding region (nuclear receptor); it reads CLICGDEASG…AGMVLGGRKF (73 aa). A Phosphoserine modification is found at Ser676. In terms of domain architecture, NR LBD spans 679 to 913; it reads QDIQLIPPLI…EFPEMMSEVI (235 aa). The segment at 687 to 933 is AF2; mediates transcriptional activation; the sequence is LINLLMSIEP…MVKPLLFHKK (247 aa). Arg766 lines the progesterone pocket.

This sequence belongs to the nuclear hormone receptor family. In terms of assembly, interacts with SMARD1 and UNC45A. Interacts with CUEDC2; the interaction promotes ubiquitination, decreases sumoylation, and represses transcriptional activity. Interacts with PIAS3; the interaction promotes sumoylation of PR in a hormone-dependent manner, inhibits DNA-binding, and alters nuclear export. Interacts with SP1; the interaction requires ligand-induced phosphorylation on Ser-345 by ERK1/2-MAPK. Interacts with PRMT2. Interacts with NCOA2 and NCOA1. Interacts with KLF9. Interacts with GTF2B. Post-translationally, phosphorylated on multiple serine sites. Several of these sites are hormone-dependent. Phosphorylation on Ser-294 is highly hormone-dependent and modulates ubiquitination and sumoylation on Lys-388. Phosphorylation on Ser-102 and Ser-345 requires induction by hormone. Basal phosphorylation on Ser-81, Ser-162, Ser-190 and Ser-400 is increased in response to progesterone and can be phosphorylated in vitro by the CDK2-A1 complex. Increased levels of phosphorylation on Ser-400 also in the presence of EGF, heregulin, IGF, PMA and FBS. Phosphorylation at this site by CDK2 is ligand-independent, and increases nuclear translocation and transcriptional activity. Phosphorylation at Ser-162 and Ser-294, but not at Ser-190, is impaired during the G(2)/M phase of the cell cycle. Phosphorylation on Ser-345 by ERK1/2 MAPK is required for interaction with SP1. Sumoylation is hormone-dependent and represses transcriptional activity. Sumoylation on all three sites is enhanced by PIAS3. Desumoylated by SENP1. Sumoylation on Lys-388, the main site of sumoylation, is repressed by ubiquitination on the same site, and modulated by phosphorylation at Ser-294. In terms of processing, ubiquitination is hormone-dependent and represses sumoylation on the same site. Promoted by MAPK-mediated phosphorylation on Ser-294. Ubiquitinated by UBR5, leading to its degradation: UBR5 specifically recognizes and binds ligand-bound PGR when it is not associated with coactivators (NCOAs). In presence of NCOAs, the UBR5-degron is not accessible, preventing its ubiquitination and degradation. Post-translationally, palmitoylated by ZDHHC7 and ZDHHC21. Palmitoylation is required for plasma membrane targeting and for rapid intracellular signaling via ERK and AKT kinases and cAMP generation.

The protein localises to the nucleus. It localises to the cytoplasm. Functionally, the steroid hormones and their receptors are involved in the regulation of eukaryotic gene expression and affect cellular proliferation and differentiation in target tissues. Transcriptional activator of several progesteron-dependent promoters in a variety of cell types. Involved in activation of SRC-dependent MAPK signaling on hormone stimulation. This chain is Progesterone receptor (PGR), found in Pan troglodytes (Chimpanzee).